Reading from the N-terminus, the 2614-residue chain is Talin-B (2614 aa).

An FERM domain is found at 85-369 (RPLKVRLMDE…GYIEILMKKR (285 aa)). The interval 393-421 (RGQTSQATTSSSLSGYDGNGGREGQYSAP) is disordered. Over residues 395–406 (QTSQATTSSSLS) the composition is skewed to low complexity. 2 coiled-coil regions span residues 1938–1965 (TQNI…ASGK) and 2033–2057 (NKAI…LVQS). An I/LWEQ domain is found at 2219–2460 (LLFAAGESLE…SIRKKEYSDQ (242 aa)). The disordered stretch occupies residues 2454-2557 (KKEYSDQTGN…AAPTAAAPNK (104 aa)). Over residues 2473 to 2487 (KPTTSISVGITPTKR) the composition is skewed to polar residues. A compositionally biased stretch (low complexity) spans 2517 to 2537 (KKPAPSQAPSSPVAPVSAPVS). Pro residues predominate over residues 2538-2548 (KPSPKPAPKPA). The HP domain occupies 2553-2614 (AAPNKTYTLE…NNIKTKLGLF (62 aa)).

It localises to the cytoplasm. The protein localises to the cytoskeleton. Its subcellular location is the cell cortex. Its function is as follows. Actin-binding protein required for multicellular morphogenesis. Substrate of pkgB and/or pkbA. This Dictyostelium discoideum (Social amoeba) protein is Talin-B (talB).